A 148-amino-acid polypeptide reads, in one-letter code: Copper transport protein ctr6 (148 aa).

The Extracellular segment spans residues methionine 1–histidine 33. The helical transmembrane segment at isoleucine 34–phenylalanine 54 threads the bilayer. Topologically, residues glutamate 55 to tyrosine 108 are cytoplasmic. A helical transmembrane segment spans residues phenylalanine 109–alanine 129. Over alanine 130–histidine 148 the chain is Extracellular.

The protein belongs to the copper transporter (Ctr) (TC 1.A.56) family. SLC31A subfamily. In terms of assembly, homotrimer.

It localises to the vacuole membrane. Functionally, mobilizes stored copper from the vacuole to the cytoplasm under conditions of copper limitation. This Schizosaccharomyces pombe (strain 972 / ATCC 24843) (Fission yeast) protein is Copper transport protein ctr6 (ctr6).